Consider the following 956-residue polypeptide: Calsyntenin-3 (956 aa).

A signal peptide spans Met1–Cys19. Residues Asn20–Ala847 lie on the Extracellular side of the membrane. Cadherin domains lie at Ile29 to Phe145 and Val146 to Trp246. Residues Asn299, Asn327, Asn347, Asn507, and Asn740 are each glycosylated (N-linked (GlcNAc...) asparagine). Residues Ala848–Val868 form a helical membrane-spanning segment. Over Arg869–Tyr956 the chain is Cytoplasmic. Positions Ala917 to Tyr956 are disordered. The segment covering Gln927–Val937 has biased composition (acidic residues). Basic and acidic residues predominate over residues Ser943–Tyr956.

This sequence belongs to the calsyntenin family. Interacts (via cadherin domains) with both alpha and beta isoforms of neurexins (NRXN1, NRXN2 and NRXN3). Directly interacts with APBA2. Forms a tripartite complex with APBA2 and APP. Interacts with low affinity with KLC1. Interacts with SLC23A2/SVCT2. Post-translationally, proteolytically processed under normal cellular conditions. A primary zeta-cleavage generates a large extracellular (soluble) N-terminal domain (sAlc) and a short C-terminal transmembrane fragment (CTF1). A secondary cleavage catalyzed by gamma-secretase within the transmembrane domain releases the beta-Alc-beta chain in the extracellular milieu and produces an intracellular fragment (AlcICD). This processing is strongly suppressed in the tripartite complex formed with APBA2 and APP, which seems to prevent the association with gamma-secretase.

Its subcellular location is the postsynaptic cell membrane. The protein resides in the endoplasmic reticulum membrane. The protein localises to the golgi apparatus membrane. It localises to the cell projection. It is found in the dendrite. Its function is as follows. Postsynaptic adhesion molecule that binds to presynaptic neurexins to mediate both excitatory and inhibitory synapse formation. Promotes synapse development by acting as a cell adhesion molecule at the postsynaptic membrane, which associates with both neurexin-alpha and neurexin-beta proteins at the presynaptic membrane. Regulates the balance between excitatory and inhibitory synapses by inhibiting formation of excitatory parallel-fiber synapses and promoting formation of inhibitory synapses in the same neuron. May also be involved in ascorbate (vitamin C) uptake via its interaction with SLC23A2/SVCT2. Complex formation with APBA2 and APP, stabilizes APP metabolism and enhances APBA2-mediated suppression of beta-APP40 secretion, due to the retardation of intracellular APP maturation. The protein is Calsyntenin-3 (CLSTN3) of Pongo abelii (Sumatran orangutan).